The following is a 494-amino-acid chain: Sulfate adenylyltransferase subunit 1 (494 aa).

A tr-type G domain is found at 24–240 (TRPLRLITCG…LELATVRSAQ (217 aa)). Residues 33 to 40 (GSVDDGKS) are G1. 33 to 40 (GSVDDGKS) contributes to the GTP binding site. The segment at 91–95 (GITID) is G2. The interval 112–115 (DTPG) is G3. Residues 112 to 116 (DTPGH) and 167 to 170 (NKID) contribute to the GTP site. The interval 167 to 170 (NKID) is G4. Residues 204–206 (SAL) form a G5 region.

Belongs to the TRAFAC class translation factor GTPase superfamily. Classic translation factor GTPase family. CysN/NodQ subfamily. In terms of assembly, heterodimer composed of CysD, the smaller subunit, and CysN.

The catalysed reaction is sulfate + ATP + H(+) = adenosine 5'-phosphosulfate + diphosphate. It participates in sulfur metabolism; hydrogen sulfide biosynthesis; sulfite from sulfate: step 1/3. Functionally, with CysD forms the ATP sulfurylase (ATPS) that catalyzes the adenylation of sulfate producing adenosine 5'-phosphosulfate (APS) and diphosphate, the first enzymatic step in sulfur assimilation pathway. APS synthesis involves the formation of a high-energy phosphoric-sulfuric acid anhydride bond driven by GTP hydrolysis by CysN coupled to ATP hydrolysis by CysD. This Rhizobium tropici protein is Sulfate adenylyltransferase subunit 1.